The chain runs to 91 residues: CLAVATA3/ESR (CLE)-related protein 27 (91 aa).

The signal sequence occupies residues 1 to 35 (MTHAREWRSSLTTTLLMVILLSYMLHLFCVYSRVG). A hydroxyproline mark is found at proline 83 and proline 86. An O-linked (Ara...) hydroxyproline glycan is attached at proline 86.

The protein belongs to the CLV3/ESR signal peptide family. The O-glycosylation (arabinosylation) of the hydroxyproline Pro-86 enhances binding affinity of the CLE27p peptide for its receptor. As to expression, mostly expressed in apex, and, to a lower extent, in roots, leaves, flowers and siliques.

The protein resides in the secreted. The protein localises to the extracellular space. Its function is as follows. Extracellular signal peptide that regulates cell fate. Represses root apical meristem maintenance. The sequence is that of CLAVATA3/ESR (CLE)-related protein 27 from Arabidopsis thaliana (Mouse-ear cress).